A 196-amino-acid polypeptide reads, in one-letter code: Holliday junction branch migration complex subunit RuvA (196 aa).

The tract at residues 1–62 (MYEYINGLIT…ENDISLYGFI (62 aa)) is domain I. Residues 63–141 (DADEKALFNK…ELASKTGMVD (79 aa)) are domain II. Residues 142 to 148 (SSSNPEQ) are flexible linker. Residues 148-196 (QSQALDDALEALLALGYTAKDVKAVAQIIGRNSDTTDGYIRSALKLLVK) form a domain III region.

The protein belongs to the RuvA family. In terms of assembly, homotetramer. Forms an RuvA(8)-RuvB(12)-Holliday junction (HJ) complex. HJ DNA is sandwiched between 2 RuvA tetramers; dsDNA enters through RuvA and exits via RuvB. An RuvB hexamer assembles on each DNA strand where it exits the tetramer. Each RuvB hexamer is contacted by two RuvA subunits (via domain III) on 2 adjacent RuvB subunits; this complex drives branch migration. In the full resolvosome a probable DNA-RuvA(4)-RuvB(12)-RuvC(2) complex forms which resolves the HJ.

It is found in the cytoplasm. In terms of biological role, the RuvA-RuvB-RuvC complex processes Holliday junction (HJ) DNA during genetic recombination and DNA repair, while the RuvA-RuvB complex plays an important role in the rescue of blocked DNA replication forks via replication fork reversal (RFR). RuvA specifically binds to HJ cruciform DNA, conferring on it an open structure. The RuvB hexamer acts as an ATP-dependent pump, pulling dsDNA into and through the RuvAB complex. HJ branch migration allows RuvC to scan DNA until it finds its consensus sequence, where it cleaves and resolves the cruciform DNA. This is Holliday junction branch migration complex subunit RuvA from Leuconostoc mesenteroides subsp. mesenteroides (strain ATCC 8293 / DSM 20343 / BCRC 11652 / CCM 1803 / JCM 6124 / NCDO 523 / NBRC 100496 / NCIMB 8023 / NCTC 12954 / NRRL B-1118 / 37Y).